Here is a 78-residue protein sequence, read N- to C-terminus: MAVFHDEVEIEDFQYDEDSETYFCPCPCGDNFSITKEELENGEGVAMCPGCSLIIKVIYDKDQFACGETVPVPSVNKE.

In terms of domain architecture, DPH-type MB spans 4 to 60 (FHDEVEIEDFQYDEDSETYFCPCPCGDNFSITKEELENGEGVAMCPGCSLIIKVIYD). The Zn(2+) site is built by C26, C28, C48, and C51.

The protein belongs to the DPH3 family.

The sequence is that of Putative DPH3 homolog B (DPH3P1) from Homo sapiens (Human).